The following is a 296-amino-acid chain: MTTLENPEMQAQLLSAALPYMQRYENKHVVVKYGGHAMGNPELGKAFARDIALLKQSGINPIVVHGGGPQIQAMLTKLGIESRFEGGLRVTDEKTVEVVEMVLAGSINKEIVALINAEGEWAIGLCGKDGNMVFAQKAHKTVIDPDSNIEKVLDLGFVGEPAEVDRTLLDLLARSEMIPVIAPVAPGRDGHTYNINADTFAGAIAGALAATRLLFLTDVPGVLDKDKNLIKELSVADAQALIKDGTISGGMIPKVETCIEAIRRGVEGVVILNGKTPHSVLLELFTEHGAGTLIVP.

Substrate-binding positions include 67-68, R89, and N194; that span reads GG.

The protein belongs to the acetylglutamate kinase family. ArgB subfamily.

It localises to the cytoplasm. The enzyme catalyses N-acetyl-L-glutamate + ATP = N-acetyl-L-glutamyl 5-phosphate + ADP. Its pathway is amino-acid biosynthesis; L-arginine biosynthesis; N(2)-acetyl-L-ornithine from L-glutamate: step 2/4. Catalyzes the ATP-dependent phosphorylation of N-acetyl-L-glutamate. The sequence is that of Acetylglutamate kinase from Brucella anthropi (strain ATCC 49188 / DSM 6882 / CCUG 24695 / JCM 21032 / LMG 3331 / NBRC 15819 / NCTC 12168 / Alc 37) (Ochrobactrum anthropi).